Here is a 118-residue protein sequence, read N- to C-terminus: Cobalt transport protein CbiN (118 aa).

Transmembrane regions (helical) follow at residues 7–27 and 70–90; these read INAL…VLGL and SALF…YFGL. The tract at residues 99 to 118 is disordered; that stretch reads ERASAASGAAAAPGDAPEGD. The segment covering 102–118 has biased composition (low complexity); it reads SAASGAAAAPGDAPEGD.

This sequence belongs to the CbiN family. In terms of assembly, forms an energy-coupling factor (ECF) transporter complex composed of an ATP-binding protein (A component, CbiO), a transmembrane protein (T component, CbiQ) and 2 possible substrate-capture proteins (S components, CbiM and CbiN) of unknown stoichimetry.

It is found in the cell membrane. Its pathway is cofactor biosynthesis; adenosylcobalamin biosynthesis. Its function is as follows. Part of the energy-coupling factor (ECF) transporter complex CbiMNOQ involved in cobalt import. This Streptomyces coelicolor (strain ATCC BAA-471 / A3(2) / M145) protein is Cobalt transport protein CbiN.